The chain runs to 186 residues: Putative thiamine-phosphate synthase 2 (186 aa).

4-amino-2-methyl-5-(diphosphooxymethyl)pyrimidine contacts are provided by residues 35-39 (QLREK) and N67. Position 68 (E68) interacts with Mg(2+). Residue S105 participates in 4-amino-2-methyl-5-(diphosphooxymethyl)pyrimidine binding. 131–133 (TSS) is a 2-[(2R,5Z)-2-carboxy-4-methylthiazol-5(2H)-ylidene]ethyl phosphate binding site. 4-amino-2-methyl-5-(diphosphooxymethyl)pyrimidine is bound at residue H134. 2-[(2R,5Z)-2-carboxy-4-methylthiazol-5(2H)-ylidene]ethyl phosphate-binding positions include G161 and 181-182 (IS).

Belongs to the thiamine-phosphate synthase family. It depends on Mg(2+) as a cofactor.

The catalysed reaction is 2-[(2R,5Z)-2-carboxy-4-methylthiazol-5(2H)-ylidene]ethyl phosphate + 4-amino-2-methyl-5-(diphosphooxymethyl)pyrimidine + 2 H(+) = thiamine phosphate + CO2 + diphosphate. The enzyme catalyses 2-(2-carboxy-4-methylthiazol-5-yl)ethyl phosphate + 4-amino-2-methyl-5-(diphosphooxymethyl)pyrimidine + 2 H(+) = thiamine phosphate + CO2 + diphosphate. It carries out the reaction 4-methyl-5-(2-phosphooxyethyl)-thiazole + 4-amino-2-methyl-5-(diphosphooxymethyl)pyrimidine + H(+) = thiamine phosphate + diphosphate. It participates in cofactor biosynthesis; thiamine diphosphate biosynthesis; thiamine phosphate from 4-amino-2-methyl-5-diphosphomethylpyrimidine and 4-methyl-5-(2-phosphoethyl)-thiazole: step 1/1. In terms of biological role, condenses 4-methyl-5-(beta-hydroxyethyl)thiazole monophosphate (THZ-P) and 2-methyl-4-amino-5-hydroxymethyl pyrimidine pyrophosphate (HMP-PP) to form thiamine monophosphate (TMP). The sequence is that of Putative thiamine-phosphate synthase 2 (thiE2) from Aquifex aeolicus (strain VF5).